The following is a 196-amino-acid chain: Probable nicotinate-nucleotide adenylyltransferase (196 aa).

The protein belongs to the NadD family.

It catalyses the reaction nicotinate beta-D-ribonucleotide + ATP + H(+) = deamido-NAD(+) + diphosphate. Its pathway is cofactor biosynthesis; NAD(+) biosynthesis; deamido-NAD(+) from nicotinate D-ribonucleotide: step 1/1. Functionally, catalyzes the reversible adenylation of nicotinate mononucleotide (NaMN) to nicotinic acid adenine dinucleotide (NaAD). The polypeptide is Probable nicotinate-nucleotide adenylyltransferase (Thermotoga petrophila (strain ATCC BAA-488 / DSM 13995 / JCM 10881 / RKU-1)).